The sequence spans 180 residues: Translation initiation factor IF-3 (180 aa).

Belongs to the IF-3 family. As to quaternary structure, monomer.

The protein resides in the cytoplasm. Functionally, IF-3 binds to the 30S ribosomal subunit and shifts the equilibrium between 70S ribosomes and their 50S and 30S subunits in favor of the free subunits, thus enhancing the availability of 30S subunits on which protein synthesis initiation begins. The protein is Translation initiation factor IF-3 of Mesoplasma florum (strain ATCC 33453 / NBRC 100688 / NCTC 11704 / L1) (Acholeplasma florum).